A 302-amino-acid polypeptide reads, in one-letter code: tRNA dimethylallyltransferase (302 aa).

9 to 16 (GPTGSGKT) contacts ATP. A substrate-binding site is contributed by 11-16 (TGSGKT).

It belongs to the IPP transferase family. As to quaternary structure, monomer. Mg(2+) is required as a cofactor.

The enzyme catalyses adenosine(37) in tRNA + dimethylallyl diphosphate = N(6)-dimethylallyladenosine(37) in tRNA + diphosphate. Its function is as follows. Catalyzes the transfer of a dimethylallyl group onto the adenine at position 37 in tRNAs that read codons beginning with uridine, leading to the formation of N6-(dimethylallyl)adenosine (i(6)A). The polypeptide is tRNA dimethylallyltransferase (Thermus thermophilus (strain ATCC BAA-163 / DSM 7039 / HB27)).